Reading from the N-terminus, the 258-residue chain is Flagellar brake protein YcgR (258 aa).

One can recognise a PilZ domain in the interval 131-248; the sequence is QKREYYRVAT…ALSLIQRYIT (118 aa).

It belongs to the YcgR family. In terms of assembly, monomer. Interacts with the flagellar basal bodies.

The protein resides in the bacterial flagellum basal body. In terms of biological role, acts as a flagellar brake, regulating swimming and swarming in a bis-(3'-5') cyclic diguanylic acid (c-di-GMP)-dependent manner. Binds 1 c-di-GMP dimer per subunit. Increasing levels of c-di-GMP lead to decreased motility. This chain is Flagellar brake protein YcgR, found in Nitrosospira multiformis (strain ATCC 25196 / NCIMB 11849 / C 71).